We begin with the raw amino-acid sequence, 499 residues long: Tektin-like protein 1 (499 aa).

Coiled coils occupy residues 197–227 (SMLT…LKTL) and 297–317 (LNEA…MAKN). At Tyr-372 the chain carries Phosphotyrosine.

In terms of assembly, microtubule inner protein component of sperm flagellar doublet microtubules.

The protein resides in the cytoplasm. It localises to the cytoskeleton. Its subcellular location is the flagellum axoneme. Microtubule inner protein (MIP) part of the dynein-decorated doublet microtubules (DMTs) in sperm flagellar axoneme, which is required for motile flagellum beating. Forms an extensive interaction network cross-linking the lumen of axonemal doublet microtubules. The sequence is that of Tektin-like protein 1 from Homo sapiens (Human).